Consider the following 150-residue polypeptide: UPF0178 protein HCH_06960 (150 aa).

The protein belongs to the UPF0178 family.

The polypeptide is UPF0178 protein HCH_06960 (Hahella chejuensis (strain KCTC 2396)).